The following is a 417-amino-acid chain: UPF0761 membrane protein Daci_4966 (417 aa).

Transmembrane regions (helical) follow at residues 49 to 69 (VLALVPFFTVALALFTAFPIF), 106 to 126 (QLGMAGFSILVITAVALILTI), 146 to 166 (VLIYWAAITLGPLVLGLSLVL), 187 to 207 (FIFDSIEYLALAAGMAGLYHY), 235 to 255 (ALGLYLASVPTYSVIYGTFAT), and 256 to 276 (LPILLIWIYMAWIIVLLGAVV).

Belongs to the UPF0761 family.

It localises to the cell inner membrane. The polypeptide is UPF0761 membrane protein Daci_4966 (Delftia acidovorans (strain DSM 14801 / SPH-1)).